The chain runs to 316 residues: ATP synthase gamma chain (316 aa).

Belongs to the ATPase gamma chain family. As to quaternary structure, F-type ATPases have 2 components, CF(1) - the catalytic core - and CF(0) - the membrane proton channel. CF(1) has five subunits: alpha(3), beta(3), gamma(1), delta(1), epsilon(1). CF(0) has three main subunits: a, b and c.

It is found in the cellular thylakoid membrane. Produces ATP from ADP in the presence of a proton gradient across the membrane. The gamma chain is believed to be important in regulating ATPase activity and the flow of protons through the CF(0) complex. This chain is ATP synthase gamma chain, found in Prochlorococcus marinus (strain MIT 9312).